An 828-amino-acid chain; its full sequence is Periplasmic nitrate reductase (828 aa).

Positions 1 to 31 (MKLSRRHFMKANAVAAAAAVAGITIPIAVRA) form a signal peptide, tat-type signal. The 4Fe-4S Mo/W bis-MGD-type domain occupies 39-95 (IHWDKAPCRFCGVGCGVLVGTQNGRIVASQGDPDAPVNRGLNCIKGYFLPKIMYGQD). Residues C46, C49, C53, and C81 each contribute to the [4Fe-4S] cluster site. Mo-bis(molybdopterin guanine dinucleotide) contacts are provided by residues K83, Q150, N175, C179, 212-219 (WGSNMAEM), 243-247 (STYQH), 262-264 (QTD), M372, Q376, N482, 508-509 (SD), K531, D558, and 718-727 (TGRVLEHWHT). A substrate-binding site is contributed by F794. 2 residues coordinate Mo-bis(molybdopterin guanine dinucleotide): N802 and K819.

This sequence belongs to the prokaryotic molybdopterin-containing oxidoreductase family. NasA/NapA/NarB subfamily. As to quaternary structure, component of the periplasmic nitrate reductase NapAB complex composed of NapA and NapB. [4Fe-4S] cluster serves as cofactor. The cofactor is Mo-bis(molybdopterin guanine dinucleotide). In terms of processing, predicted to be exported by the Tat system. The position of the signal peptide cleavage has not been experimentally proven.

Its subcellular location is the periplasm. The catalysed reaction is 2 Fe(II)-[cytochrome] + nitrate + 2 H(+) = 2 Fe(III)-[cytochrome] + nitrite + H2O. In terms of biological role, catalytic subunit of the periplasmic nitrate reductase complex NapAB. Receives electrons from NapB and catalyzes the reduction of nitrate to nitrite. This Pectobacterium carotovorum subsp. carotovorum (strain PC1) protein is Periplasmic nitrate reductase.